The primary structure comprises 338 residues: Protein FosB (338 aa).

Disordered regions lie at residues 1–54 and 80–162; these read MFQA…PGSF and AQSQ…RVRR. Positions 13 to 31 are enriched in polar residues; it reads SRCSSSPSAESQYLSSVDS. At Ser27 the chain carries Phosphoserine. Residues 113-124 are compositionally biased toward gly residues; sequence SSGGASGSGGPS. Low complexity predominate over residues 125-137; that stretch reads TSGTTSGPGPARP. One can recognise a bZIP domain in the interval 155-218; that stretch reads EEKRRVRRER…ERLEFVLVAH (64 aa). Residues 157–182 form a basic motif region; the sequence is KRRVRRERNKLAAAKCRNRRRELTDR. Residues 183 to 211 are leucine-zipper; the sequence is LQAETDQLEEEKAELESEIAELQKEKERL. Disordered stretches follow at residues 222–271 and 315–338; these read CKIP…TSQD and AGTQRPSGSDQPTDPLNSPSLLAL. Positions 256–265 are enriched in pro residues; it reads LPPPPAPPLP. The segment covering 318–338 has biased composition (polar residues); it reads QRPSGSDQPTDPLNSPSLLAL.

It belongs to the bZIP family. Fos subfamily. As to quaternary structure, heterodimer; binds to DNA as heterodimer. Component of an AP-1 transcription factor complex; composed of FOS-JUN heterodimers. As part of the AP-1 transcription factor complex, forms heterodimers with JUN, JUNB or JUND, thereby binding to the AP-1 consensus sequence and stimulating transcription. Interacts with the BAF multiprotein chromatin-remodeling complex subunits SMARCB1 and SMARCD1. Interacts with ARID1A and JUN. In terms of processing, phosphorylated.

The protein resides in the nucleus. Functionally, heterodimerizes with proteins of the JUN family to form an AP-1 transcription factor complex, thereby enhancing their DNA binding activity to an AP-1 consensus sequence 5'-TGA[GC]TCA-3' and enhancing their transcriptional activity. Exhibits transactivation activity in vitro. As part of the AP-1 complex, facilitates enhancer selection together with cell-type-specific transcription factors by collaboratively binding to nucleosomal enhancers and recruiting the SWI/SNF (BAF) chromatin remodeling complex to establish accessible chromatin. Together with JUN, plays a role in activation-induced cell death of T cells by binding to the AP-1 promoter site of FASLG/CD95L, and inducing its transcription in response to activation of the TCR/CD3 signaling pathway. Involved in the display of nurturing behavior towards newborns. May play a role in neurogenesis in the hippocampus and in learning and memory-related tasks by regulating the expression of various genes involved in neurogenesis, depression and epilepsy. Implicated in behavioral responses related to morphine reward and spatial memory. The sequence is that of Protein FosB (FOSB) from Canis lupus familiaris (Dog).